The chain runs to 369 residues: Isocitrate dehydrogenase [NAD] subunit 2, mitochondrial (369 aa).

Residues 1-15 constitute a mitochondrion transit peptide; that stretch reads MLRNTFFRNTSRRFL. The residue at position 105 (Thr-105) is a Phosphothreonine. The substrate site is built by Arg-119, Arg-129, and Arg-150. Phosphothreonine is present on Thr-153. Asp-237 is a substrate binding site. Asp-237, Asp-263, and Asp-267 together coordinate Mg(2+). Thr-327 and Thr-349 each carry phosphothreonine.

It belongs to the isocitrate and isopropylmalate dehydrogenases family. Octamer of two non-identical subunits IDH1 and IDH2. The cofactor is Mg(2+). Mn(2+) serves as cofactor.

The protein localises to the mitochondrion matrix. The enzyme catalyses D-threo-isocitrate + NAD(+) = 2-oxoglutarate + CO2 + NADH. Its activity is regulated as follows. Allosterically regulated by several compounds including AMP, NAD(+), and citrate. Functionally, performs an essential role in the oxidative function of the citric acid cycle. Also binds RNA; specifically to the 5'-untranslated leaders of mitochondrial mRNAs. The polypeptide is Isocitrate dehydrogenase [NAD] subunit 2, mitochondrial (IDH2) (Saccharomyces cerevisiae (strain ATCC 204508 / S288c) (Baker's yeast)).